Reading from the N-terminus, the 308-residue chain is Glucan 1,3-beta-glucosidase BGL2 (308 aa).

An N-terminal signal peptide occupies residues 1–18; it reads MQIKFLTTLATVLTSVAA. Glu-119 serves as the catalytic Proton donor. Asn-197 is a glycosylation site (N-linked (GlcNAc...) asparagine). The active-site Nucleophile is the Glu-228.

The protein belongs to the glycosyl hydrolase 17 family.

It is found in the secreted. It localises to the cell wall. The protein resides in the cytoplasm. The catalysed reaction is Successive hydrolysis of beta-D-glucose units from the non-reducing ends of (1-&gt;3)-beta-D-glucans, releasing alpha-glucose.. Functionally, cell wall glucan 1,3-beta-glucosidase involved in cell wall biosynthesis and virulence. Crucial for delivery of beta-1,3-glucan to the biofilm matrix and for accumulation of mature matrix biomass. Plays a role as a major antigen in human systemic candidiasis patients. The polypeptide is Glucan 1,3-beta-glucosidase BGL2 (BGL2) (Candida albicans (strain SC5314 / ATCC MYA-2876) (Yeast)).